The primary structure comprises 360 residues: Insulin gene enhancer protein ISL-2 (360 aa).

LIM zinc-binding domains are found at residues A25–G86 and I87–R149. A disordered region spans residues A151 to Q177. Phosphoserine is present on residues S154 and S157. Positions T192–S251 form a DNA-binding region, homeobox. The LIM-binding domain (LID) stretch occupies residues G273–W302. S280 is modified (phosphoserine). Low complexity predominate over residues S328 to S337. Residues S328–T360 are disordered. Over residues D338 to T360 the composition is skewed to polar residues.

As to quaternary structure, interacts with LHX4.

It localises to the nucleus. Its function is as follows. Transcriptional factor that defines subclasses of motoneurons that segregate into columns in the spinal cord and select distinct axon pathways. In Rattus norvegicus (Rat), this protein is Insulin gene enhancer protein ISL-2 (Isl2).